Here is a 590-residue protein sequence, read N- to C-terminus: Arginine--tRNA ligase (590 aa).

Positions 130 to 140 match the 'HIGH' region motif; the sequence is PNIAKEMHVGH.

It belongs to the class-I aminoacyl-tRNA synthetase family. As to quaternary structure, monomer.

The protein localises to the cytoplasm. The enzyme catalyses tRNA(Arg) + L-arginine + ATP = L-arginyl-tRNA(Arg) + AMP + diphosphate. This chain is Arginine--tRNA ligase, found in Synechococcus sp. (strain CC9605).